A 62-amino-acid chain; its full sequence is Photosystem II reaction center protein Z (62 aa).

2 consecutive transmembrane segments (helical) span residues 8–28 (ALLL…VLYA) and 41–61 (LVGG…NYFV).

Belongs to the PsbZ family. PSII is composed of 1 copy each of membrane proteins PsbA, PsbB, PsbC, PsbD, PsbE, PsbF, PsbH, PsbI, PsbJ, PsbK, PsbL, PsbM, PsbT, PsbX, PsbY, PsbZ, Psb30/Ycf12, peripheral proteins PsbO, CyanoQ (PsbQ), PsbU, PsbV and a large number of cofactors. It forms dimeric complexes.

Its subcellular location is the cellular thylakoid membrane. In terms of biological role, may control the interaction of photosystem II (PSII) cores with the light-harvesting antenna, regulates electron flow through the 2 photosystem reaction centers. PSII is a light-driven water plastoquinone oxidoreductase, using light energy to abstract electrons from H(2)O, generating a proton gradient subsequently used for ATP formation. The sequence is that of Photosystem II reaction center protein Z from Synechococcus elongatus (strain ATCC 33912 / PCC 7942 / FACHB-805) (Anacystis nidulans R2).